The primary structure comprises 91 residues: Large ribosomal subunit protein bL28 (91 aa).

Belongs to the bacterial ribosomal protein bL28 family.

In Protochlamydia amoebophila (strain UWE25), this protein is Large ribosomal subunit protein bL28.